We begin with the raw amino-acid sequence, 392 residues long: Chorismate synthase (392 aa).

Arg-40 and Arg-46 together coordinate NADP(+). Residues 129 to 131 (RSS), 257 to 258 (QA), Gly-302, 317 to 321 (KPIAT), and Arg-343 contribute to the FMN site.

It belongs to the chorismate synthase family. Homotetramer. Requires FMNH2 as cofactor.

It catalyses the reaction 5-O-(1-carboxyvinyl)-3-phosphoshikimate = chorismate + phosphate. The protein operates within metabolic intermediate biosynthesis; chorismate biosynthesis; chorismate from D-erythrose 4-phosphate and phosphoenolpyruvate: step 7/7. Catalyzes the anti-1,4-elimination of the C-3 phosphate and the C-6 proR hydrogen from 5-enolpyruvylshikimate-3-phosphate (EPSP) to yield chorismate, which is the branch point compound that serves as the starting substrate for the three terminal pathways of aromatic amino acid biosynthesis. This reaction introduces a second double bond into the aromatic ring system. The chain is Chorismate synthase from Chloroherpeton thalassium (strain ATCC 35110 / GB-78).